The chain runs to 220 residues: Large ribosomal subunit protein uL1 (220 aa).

This sequence belongs to the universal ribosomal protein uL1 family. In terms of assembly, part of the 50S ribosomal subunit.

In terms of biological role, binds directly to 23S rRNA. The L1 stalk is quite mobile in the ribosome, and is involved in E site tRNA release. Functionally, protein L1 is also a translational repressor protein, it controls the translation of the L11 operon by binding to its mRNA. In Ehrlichia chaffeensis (strain ATCC CRL-10679 / Arkansas), this protein is Large ribosomal subunit protein uL1.